A 209-amino-acid chain; its full sequence is Thiamine-phosphate synthase (209 aa).

Residues 36 to 40 (QYRDK) and Asn68 contribute to the 4-amino-2-methyl-5-(diphosphooxymethyl)pyrimidine site. The Mg(2+) site is built by Asp69 and Asp87. A 4-amino-2-methyl-5-(diphosphooxymethyl)pyrimidine-binding site is contributed by Thr106. 2-[(2R,5Z)-2-carboxy-4-methylthiazol-5(2H)-ylidene]ethyl phosphate is bound at residue 133-135 (SST). Lys136 contributes to the 4-amino-2-methyl-5-(diphosphooxymethyl)pyrimidine binding site. Gly163 is a 2-[(2R,5Z)-2-carboxy-4-methylthiazol-5(2H)-ylidene]ethyl phosphate binding site.

The protein belongs to the thiamine-phosphate synthase family. Mg(2+) serves as cofactor.

The enzyme catalyses 2-[(2R,5Z)-2-carboxy-4-methylthiazol-5(2H)-ylidene]ethyl phosphate + 4-amino-2-methyl-5-(diphosphooxymethyl)pyrimidine + 2 H(+) = thiamine phosphate + CO2 + diphosphate. The catalysed reaction is 2-(2-carboxy-4-methylthiazol-5-yl)ethyl phosphate + 4-amino-2-methyl-5-(diphosphooxymethyl)pyrimidine + 2 H(+) = thiamine phosphate + CO2 + diphosphate. It carries out the reaction 4-methyl-5-(2-phosphooxyethyl)-thiazole + 4-amino-2-methyl-5-(diphosphooxymethyl)pyrimidine + H(+) = thiamine phosphate + diphosphate. Its pathway is cofactor biosynthesis; thiamine diphosphate biosynthesis; thiamine phosphate from 4-amino-2-methyl-5-diphosphomethylpyrimidine and 4-methyl-5-(2-phosphoethyl)-thiazole: step 1/1. Functionally, condenses 4-methyl-5-(beta-hydroxyethyl)thiazole monophosphate (THZ-P) and 2-methyl-4-amino-5-hydroxymethyl pyrimidine pyrophosphate (HMP-PP) to form thiamine monophosphate (TMP). The protein is Thiamine-phosphate synthase of Pseudomonas aeruginosa (strain LESB58).